A 231-amino-acid polypeptide reads, in one-letter code: Tol-Pal system protein TolQ (231 aa).

The next 3 membrane-spanning stretches (helical) occupy residues 20–40, 134–154, and 176–196; these read IVVQLVMLTLVAASVTSWIMI, FLATVGSTSPYVGLFGTVWGI, and IAEALIATAIGLFAAIPAVIA.

It belongs to the ExbB/TolQ family. The Tol-Pal system is composed of five core proteins: the inner membrane proteins TolA, TolQ and TolR, the periplasmic protein TolB and the outer membrane protein Pal. They form a network linking the inner and outer membranes and the peptidoglycan layer.

It is found in the cell inner membrane. Its function is as follows. Part of the Tol-Pal system, which plays a role in outer membrane invagination during cell division and is important for maintaining outer membrane integrity. The protein is Tol-Pal system protein TolQ of Pseudomonas aeruginosa (strain ATCC 15692 / DSM 22644 / CIP 104116 / JCM 14847 / LMG 12228 / 1C / PRS 101 / PAO1).